Reading from the N-terminus, the 780-residue chain is Zinc finger protein GLIS3 (780 aa).

2 stretches are compositionally biased toward polar residues: residues 80-92 (PSLS…QNGT) and 106-115 (VSGNSVSNSL). 2 disordered regions span residues 80-148 (PSLS…KKRA) and 290-315 (PSAL…HLHH). Residues 135 to 148 (SATRAHSTRSKKRA) are compositionally biased toward basic residues. Pro residues predominate over residues 293 to 308 (LPLPLPPPQGPPPPYH). The C2H2-type 1 zinc-finger motif lies at 345–370 (HCCRWIDCSALYDQQEELVRHIEKVH). The C2H2-type 2; atypical zinc finger occupies 379-406 (FTCFWTGCPRRYKPFNARYKLLIHMRVH). 3 consecutive C2H2-type zinc fingers follow at residues 412–436 (NKCT…LRSH), 442–466 (YLCQ…QRTH), and 472–496 (YACQ…VKAH). Disordered regions lie at residues 485–512 (DPSS…SSTE) and 527–670 (LQPA…QPNG). The short motif at 490 to 506 (RKHVKAHSSREQQARKK) is the Bipartite nuclear localization signal element. Basic and acidic residues predominate over residues 497-512 (SSREQQARKKLRSSTE). A compositionally biased stretch (low complexity) spans 567 to 577 (HSTRSGTAAGA). A compositionally biased stretch (polar residues) spans 593-605 (VQGSPHNPSSQLP).

This sequence belongs to the GLI C2H2-type zinc-finger protein family. In the embryo, expressed at high levels in the kidney and testis. In the adult, expressed at high levels in the kidney and uterus and at lower levels in the brain, lung, skeletal muscle and pancreas.

The protein localises to the nucleus. Functionally, acts both as a repressor and activator of transcription. Binds to the consensus sequence 5'-GACCACCCAC-3'. The protein is Zinc finger protein GLIS3 of Mus musculus (Mouse).